The following is a 251-amino-acid chain: Flap endonuclease Xni (251 aa).

D104 is a binding site for Mg(2+). The region spanning 160–249 (VQPQQLPDYW…IDGNLQQLRL (90 aa)) is the 5'-3' exonuclease domain. K(+) is bound by residues L171, A172, P180, V182, and I185. The tract at residues 184-189 (GIGPKS) is interaction with DNA.

This sequence belongs to the Xni family. It depends on Mg(2+) as a cofactor. Requires K(+) as cofactor.

Its function is as follows. Has flap endonuclease activity. During DNA replication, flap endonucleases cleave the 5'-overhanging flap structure that is generated by displacement synthesis when DNA polymerase encounters the 5'-end of a downstream Okazaki fragment. This chain is Flap endonuclease Xni, found in Escherichia coli O17:K52:H18 (strain UMN026 / ExPEC).